The chain runs to 289 residues: Splicing factor C9orf78 homolog (289 aa).

The segment covering 1–12 (MPVVRKIFRRRR) has biased composition (basic residues). Disordered stretches follow at residues 1–27 (MPVV…SEEV) and 86–109 (GKDK…TNRR). The interval 5-58 (RKIFRRRRGDSESEEDEQDSEEVRLKLEETREVQNLRKRPNGVSAVALLVGEKV) is interaction with SNRNP200. A phosphoserine mark is found at Ser15 and Ser17. Residue Tyr147 is modified to Phosphotyrosine. The segment covering 232–283 (LNAPIRRNKEEPKARPLRVGDTEKPEPERSPPNRKRPANEKATDDYHYEKFK) has biased composition (basic and acidic residues). Positions 232–289 (LNAPIRRNKEEPKARPLRVGDTEKPEPERSPPNRKRPANEKATDDYHYEKFKKMNRRY) are disordered. Position 253 is a phosphothreonine (Thr253). Ser261 bears the Phosphoserine mark.

This sequence belongs to the TLS1 family. In terms of assembly, component of the spliceosome. Interacts with SNRNP200; the interaction is direct. Interacts with PRPF8.

It localises to the nucleus. The protein localises to the chromosome. The protein resides in the centromere. In terms of biological role, plays a role in pre-mRNA splicing by promoting usage of the upstream 3'-splice site at alternative NAGNAG splice sites; these are sites featuring alternative acceptor motifs separated by only a few nucleotides. May also modulate exon inclusion events. Plays a role in spliceosomal remodeling by displacing WBP4 from SNRNP200 and may act to inhibit SNRNP200 helicase activity. Binds U5 snRNA. Required for proper chromosome segregation. Not required for splicing of shelterin components. The protein is Splicing factor C9orf78 homolog of Pongo abelii (Sumatran orangutan).